Here is an 85-residue protein sequence, read N- to C-terminus: Putative membrane protein insertion efficiency factor (85 aa).

This sequence belongs to the UPF0161 family.

It is found in the cell inner membrane. Could be involved in insertion of integral membrane proteins into the membrane. The polypeptide is Putative membrane protein insertion efficiency factor (Vibrio cholerae serotype O1 (strain ATCC 39315 / El Tor Inaba N16961)).